Consider the following 430-residue polypeptide: Glutamate-1-semialdehyde 2,1-aminomutase (430 aa).

The residue at position 270 (lysine 270) is an N6-(pyridoxal phosphate)lysine.

This sequence belongs to the class-III pyridoxal-phosphate-dependent aminotransferase family. HemL subfamily. Homodimer. Requires pyridoxal 5'-phosphate as cofactor.

It localises to the cytoplasm. It catalyses the reaction (S)-4-amino-5-oxopentanoate = 5-aminolevulinate. It functions in the pathway porphyrin-containing compound metabolism; protoporphyrin-IX biosynthesis; 5-aminolevulinate from L-glutamyl-tRNA(Glu): step 2/2. This chain is Glutamate-1-semialdehyde 2,1-aminomutase, found in Cupriavidus metallidurans (strain ATCC 43123 / DSM 2839 / NBRC 102507 / CH34) (Ralstonia metallidurans).